Here is a 74-residue protein sequence, read N- to C-terminus: Protein kish-B (74 aa).

Residues 1-22 (MTNVYSLDGILVFGLLFVCTCA) form the signal peptide. Residues 23 to 52 (YFKKVPRLKTWLLSEKKGVWGVFYKAAVIG) lie on the Extracellular side of the membrane. The chain crosses the membrane as a helical span at residues 53–73 (TRLHAAVAIACVVMAFYVLFI). Residue Lys74 is a topological domain, cytoplasmic.

Belongs to the KISH family.

The protein localises to the golgi apparatus membrane. Involved in the early part of the secretory pathway. This is Protein kish-B (TMEM167B) from Homo sapiens (Human).